A 569-amino-acid polypeptide reads, in one-letter code: Peroxynitrite isomerase THAP4 (569 aa).

The segment at 1-85 (MVICCAAVNC…LKPTAVPSIF (85 aa)) adopts a THAP-type zinc-finger fold. Residues 83–219 (SIFHLSEKKR…GISMDDFTPP (137 aa)) are disordered. Polar residues predominate over residues 121–130 (IGSSLSSSDN). S159 carries the phosphoserine modification. Positions 196–210 (ASSSAADAGGADKSG) are enriched in low complexity. An HCFC1-binding motif (HBM) motif is present at residues 230–233 (LHSY). Residue S234 is modified to Phosphoserine. The segment at 235-312 (FSSKHTRERP…EAVQSEHSDA (78 aa)) is disordered. Residues 242 to 262 (ERPSVPREPMDRKRLKRDIEP) show a composition bias toward basic and acidic residues. Positions 265–279 (SGNSVAQSPPSSSLT) are enriched in polar residues. Residues 280–289 (ATPQKASQSP) are compositionally biased toward low complexity. The segment at 407–569 (PPKLNPVVEP…LHITYKKVTP (163 aa)) is nitrobindin. Heme b-binding residues include T436 and H559.

In the C-terminal section; belongs to the nitrobindin family. In terms of assembly, homodimer. Heme b serves as cofactor.

Its subcellular location is the cytoplasm. The protein resides in the nucleus. The catalysed reaction is peroxynitrite = nitrate. It participates in nitrogen metabolism. Its function is as follows. Heme-binding protein able to scavenge peroxynitrite and to protect free L-tyrosine against peroxynitrite-mediated nitration, by acting as a peroxynitrite isomerase that converts peroxynitrite to nitrate. Therefore, this protein likely plays a role in peroxynitrite sensing and in the detoxification of reactive nitrogen and oxygen species (RNS and ROS, respectively). Is able to bind nitric oxide (NO) in vitro, but may act as a sensor of peroxynitrite levels in vivo, possibly modulating the transcriptional activity residing in the N-terminal region. The chain is Peroxynitrite isomerase THAP4 from Rattus norvegicus (Rat).